A 117-amino-acid polypeptide reads, in one-letter code: Immunoglobulin heavy variable 1-2 (117 aa).

The first 19 residues, 1–19 (MDWTWRILFLVAAATGAHS), serve as a signal peptide directing secretion. Q20 carries the post-translational modification Pyrrolidone carboxylic acid. Positions 20–44 (QVQLVQSGAEVKKPGASVKVSCKAS) are framework-1. Residues 20-117 (QVQLVQSGAE…DDTAVYYCAR (98 aa)) form the Ig-like domain. A disulfide bridge links C41 with C115. The segment at 45–52 (GYTFTGYY) is complementarity-determining-1. Residues 53 to 69 (MHWVRQAPGQGLEWMGW) are framework-2. Positions 70–77 (INPNSGGT) are complementarity-determining-2. Residues 78–115 (NYAQKFQGWVTMTRDTSISTAYMELSRLRSDDTAVYYC) form a framework-3 region. Positions 116-117 (AR) are complementarity-determining-3.

In terms of assembly, immunoglobulins are composed of two identical heavy chains and two identical light chains; disulfide-linked.

Its subcellular location is the secreted. It is found in the cell membrane. Its function is as follows. V region of the variable domain of immunoglobulin heavy chains that participates in the antigen recognition. Immunoglobulins, also known as antibodies, are membrane-bound or secreted glycoproteins produced by B lymphocytes. In the recognition phase of humoral immunity, the membrane-bound immunoglobulins serve as receptors which, upon binding of a specific antigen, trigger the clonal expansion and differentiation of B lymphocytes into immunoglobulins-secreting plasma cells. Secreted immunoglobulins mediate the effector phase of humoral immunity, which results in the elimination of bound antigens. The antigen binding site is formed by the variable domain of one heavy chain, together with that of its associated light chain. Thus, each immunoglobulin has two antigen binding sites with remarkable affinity for a particular antigen. The variable domains are assembled by a process called V-(D)-J rearrangement and can then be subjected to somatic hypermutations which, after exposure to antigen and selection, allow affinity maturation for a particular antigen. The sequence is that of Immunoglobulin heavy variable 1-2 from Homo sapiens (Human).